Reading from the N-terminus, the 81-residue chain is Antitoxin VapB20 (81 aa).

Functionally, antitoxin component of a type II toxin-antitoxin (TA) system. Neutralizes the toxic effect of cognate toxin VapC20. The polypeptide is Antitoxin VapB20 (vapB20) (Mycobacterium tuberculosis (strain CDC 1551 / Oshkosh)).